The sequence spans 624 residues: Probable Xaa-Pro aminopeptidase P (624 aa).

Residues D421, D432, E530, and E544 each coordinate Mn(2+).

The protein belongs to the peptidase M24B family. Mn(2+) serves as cofactor.

It carries out the reaction Release of any N-terminal amino acid, including proline, that is linked to proline, even from a dipeptide or tripeptide.. Its function is as follows. Catalyzes the removal of a penultimate prolyl residue from the N-termini of peptides. The sequence is that of Probable Xaa-Pro aminopeptidase P (AMPP) from Arthroderma otae (strain ATCC MYA-4605 / CBS 113480) (Microsporum canis).